Reading from the N-terminus, the 255-residue chain is Very-long-chain (3R)-3-hydroxyacyl-CoA dehydratase 2 (255 aa).

Residues 3-42 (AAAAATAAAKGNGGGGGRAGAGDASGTRKKKGPGPLATAY) are Cytoplasmic-facing. Positions 11–34 (AKGNGGGGGRAGAGDASGTRKKKG) are disordered. Over residues 13–22 (GNGGGGGRAG) the composition is skewed to gly residues. The helical transmembrane segment at 43–61 (LVIYNVVMTAGWLVIAVGL) threads the bilayer. The Lumenal segment spans residues 62-80 (VRAYLAKGSYHSLYYSIEK). The chain crosses the membrane as a helical span at residues 81-98 (PLKFFQTGALLEILHCAI). Over 99-108 (GIVPSSVVLT) the chain is Cytoplasmic. The helical transmembrane segment at 109 to 126 (SFQVMSRVFLIWAVTHSV) threads the bilayer. The Lumenal portion of the chain corresponds to 127–131 (KEVQS). The chain crosses the membrane as a helical span at residues 132–147 (EDSVLLFVIAWTITEI). Residues 148–170 (IRYSFYTFSLLNHLPYLIKWARY) are Cytoplasmic-facing. A helical membrane pass occupies residues 171 to 188 (TLFIVLYPMGVSGELLTI). Residues tyrosine 177 and glutamate 184 contribute to the active site. At 189–218 (YAALPFVRQAGLYSISLPNKYNFSFDYYAF) the chain is on the lumenal side. Residues 199 to 215 (GLYSISLPNKYNFSFDY) are may be involved in interaction with TECR. The N-linked (GlcNAc...) asparagine glycan is linked to asparagine 210. Residues 219–236 (LILIMISYIPIFPQLYFH) form a helical membrane-spanning segment. Over 237 to 255 (MIHQRRKILSHTEEHKKFE) the chain is Cytoplasmic.

The protein belongs to the very long-chain fatty acids dehydratase HACD family. In terms of assembly, may interact with enzymes of the ELO family (including ELOVL1); with those enzymes that mediate condensation, the first of the four steps of the reaction cycle responsible for fatty acids elongation, may be part of a larger fatty acids elongase complex. Interacts with BCAP31. Interacts (via the third lumenal loop) with TECR.

The protein localises to the endoplasmic reticulum membrane. The catalysed reaction is a very-long-chain (3R)-3-hydroxyacyl-CoA = a very-long-chain (2E)-enoyl-CoA + H2O. It catalyses the reaction (3R)-hydroxyhexadecanoyl-CoA = (2E)-hexadecenoyl-CoA + H2O. It carries out the reaction (3R)-hydroxyoctadecanoyl-CoA = (2E)-octadecenoyl-CoA + H2O. The enzyme catalyses (3R)-hydroxyeicosanoyl-CoA = (2E)-eicosenoyl-CoA + H2O. The catalysed reaction is (3R)-hydroxydocosanoyl-CoA = (2E)-docosenoyl-CoA + H2O. It catalyses the reaction (3R)-hydroxytetracosanoyl-CoA = (2E)-tetracosenoyl-CoA + H2O. It carries out the reaction (3R)-hydroxyhexacosanoyl-CoA = (2E)-hexacosenoyl-CoA + H2O. It functions in the pathway lipid metabolism; fatty acid biosynthesis. In terms of biological role, catalyzes the third of the very long-chain fatty acids (VLCFA) elongation four-step cycle (condensation, reduction, dehydration, and reduction). This endoplasmic reticulum-elongation process is characterized by the addition of two carbons to the lipid chain through each cycle. This enzyme catalyzes the dehydration of the 3-hydroxyacyl-CoA intermediate into trans-2,3-enoyl-CoA, within each cycle of elongation. Therefore, it participates in the production of various VLCFAs involved in multiple biological processes as precursors of membrane lipids and lipid mediators. In Pongo abelii (Sumatran orangutan), this protein is Very-long-chain (3R)-3-hydroxyacyl-CoA dehydratase 2.